We begin with the raw amino-acid sequence, 562 residues long: ATP synthase subunit beta, mitochondrial (562 aa).

Low complexity-rich tracts occupy residues 1 to 13 (MASR…LLRS) and 20 to 40 (SKSP…SSKS). Disordered stretches follow at residues 1-43 (MASR…SRAS) and 58-83 (SAAA…KITD). The N-terminal 55 residues, 1-55 (MASRRLLSSLLRSSSRRSVSKSPISNINPKLSSSSPSSKSRASPYGYLLTRAAEY), are a transit peptide targeting the mitochondrion. Residue 237 to 244 (GGAGVGKT) participates in ATP binding.

It belongs to the ATPase alpha/beta chains family. F-type ATPases have 2 components, CF(1) - the catalytic core - and CF(0) - the membrane proton channel. CF(1) has five subunits: alpha(3), beta(3), gamma(1), delta(1), epsilon(1). CF(0) has three main subunits: a, b and c.

The protein localises to the mitochondrion. It localises to the mitochondrion inner membrane. It catalyses the reaction ATP + H2O + 4 H(+)(in) = ADP + phosphate + 5 H(+)(out). Its function is as follows. Mitochondrial membrane ATP synthase (F(1)F(0) ATP synthase or Complex V) produces ATP from ADP in the presence of a proton gradient across the membrane which is generated by electron transport complexes of the respiratory chain. F-type ATPases consist of two structural domains, F(1) - containing the extramembraneous catalytic core, and F(0) - containing the membrane proton channel, linked together by a central stalk and a peripheral stalk. During catalysis, ATP synthesis in the catalytic domain of F(1) is coupled via a rotary mechanism of the central stalk subunits to proton translocation. Subunits alpha and beta form the catalytic core in F(1). Rotation of the central stalk against the surrounding alpha(3)beta(3) subunits leads to hydrolysis of ATP in three separate catalytic sites on the beta subunits. The polypeptide is ATP synthase subunit beta, mitochondrial (ATPB) (Hevea brasiliensis (Para rubber tree)).